The primary structure comprises 79 residues: Potassium channel toxin Hge-beta-KTx (79 aa).

A signal peptide spans 1–21; that stretch reads MAKSFFAAFLIIMLISSLVDG. The BetaSPN-type CS-alpha/beta domain maps to 48 to 79; that stretch reads EYMCPVVSSFCKQHCARLGKSGQCDLLECICS. Intrachain disulfides connect Cys51-Cys71, Cys58-Cys76, and Cys62-Cys78.

Expressed by the venom gland.

Its subcellular location is the secreted. Functionally, the full peptide presents antibacterial and cytotoxic activities. The synthetic C-terminus (AA 33-76) inhibits voltage-gated potassium channels Kv1.1/KCNA1, Kv1.2/KCNA2, and Kv1.3/KCNA3. The protein is Potassium channel toxin Hge-beta-KTx of Hoffmannihadrurus gertschi (Scorpion).